A 116-amino-acid chain; its full sequence is NADH-ubiquinone oxidoreductase chain 3 (116 aa).

Transmembrane regions (helical) follow at residues 3–23, 56–76, and 87–107; these read LITTIITITITLSAVLATVSF, FFLIAILFLLFDLEIALLLPL, and LTLVWSTAVLALLTLGLIYEW.

The protein belongs to the complex I subunit 3 family.

The protein localises to the mitochondrion membrane. The catalysed reaction is a ubiquinone + NADH + 5 H(+)(in) = a ubiquinol + NAD(+) + 4 H(+)(out). Its function is as follows. Core subunit of the mitochondrial membrane respiratory chain NADH dehydrogenase (Complex I) that is believed to belong to the minimal assembly required for catalysis. Complex I functions in the transfer of electrons from NADH to the respiratory chain. The immediate electron acceptor for the enzyme is believed to be ubiquinone. This Oncorhynchus kisutch (Coho salmon) protein is NADH-ubiquinone oxidoreductase chain 3 (MT-ND3).